The primary structure comprises 237 residues: Large ribosomal subunit protein uL1 (237 aa).

Belongs to the universal ribosomal protein uL1 family. Part of the 50S ribosomal subunit.

Its function is as follows. Binds directly to 23S rRNA. The L1 stalk is quite mobile in the ribosome, and is involved in E site tRNA release. In terms of biological role, protein L1 is also a translational repressor protein, it controls the translation of the L11 operon by binding to its mRNA. In Solibacter usitatus (strain Ellin6076), this protein is Large ribosomal subunit protein uL1.